We begin with the raw amino-acid sequence, 150 residues long: Histone H2B.2 (150 aa).

Basic and acidic residues-rich tracts occupy residues Met-1–Glu-21 and Glu-33–Lys-49. The tract at residues Met-1–Lys-58 is disordered. Lys-7 and Lys-34 each carry N6-acetyllysine. Residue Lys-146 forms a Glycyl lysine isopeptide (Lys-Gly) (interchain with G-Cter in ubiquitin) linkage.

This sequence belongs to the histone H2B family. The nucleosome is a histone octamer containing two molecules each of H2A, H2B, H3 and H4 assembled in one H3-H4 heterotetramer and two H2A-H2B heterodimers. The octamer wraps approximately 147 bp of DNA. Can be acetylated to form H2BK6ac and H2BK33ac. Post-translationally, monoubiquitinated by BRE1 to form H2BK143ub1 and deubiquitinated by UBP26. Required for heterochromatic histone H3 di- and trimethylation at H3K4me. May give a specific tag for epigenetic transcriptional activation.

The protein resides in the nucleus. It is found in the chromosome. Its function is as follows. Core component of nucleosome. Nucleosomes wrap and compact DNA into chromatin, limiting DNA accessibility to the cellular machineries which require DNA as a template. Histones thereby play a central role in transcription regulation, DNA repair, DNA replication and chromosomal stability. DNA accessibility is regulated via a complex set of post-translational modifications of histones, also called histone code, and nucleosome remodeling. The polypeptide is Histone H2B.2 (H2B.2) (Oryza sativa subsp. indica (Rice)).